The chain runs to 136 residues: Putative zinc finger protein 818 (136 aa).

The C2H2-type 1; degenerate zinc finger occupies 64 to 83; that stretch reads NVCGKVLSQNSHLVNHQRIH. The C2H2-type 2 zinc-finger motif lies at 89–111; sequence YRCHECGKAFTQGSRFINHQIVH.

This sequence belongs to the krueppel C2H2-type zinc-finger protein family.

It localises to the nucleus. Its function is as follows. May be involved in transcriptional regulation. This is Putative zinc finger protein 818 (ZNF818P) from Homo sapiens (Human).